Consider the following 204-residue polypeptide: uncharacterized protein (204 aa).

This is an uncharacterized protein from Saccharomyces cerevisiae (strain ATCC 204508 / S288c) (Baker's yeast).